The primary structure comprises 352 residues: Chorismate synthase (352 aa).

Position 48 (Arg-48) interacts with NADP(+). FMN-binding positions include 125-127, 237-238, Gly-278, 293-297, and Arg-319; these read RSS, NA, and KPTSS.

This sequence belongs to the chorismate synthase family. As to quaternary structure, homotetramer. It depends on FMNH2 as a cofactor.

The catalysed reaction is 5-O-(1-carboxyvinyl)-3-phosphoshikimate = chorismate + phosphate. Its pathway is metabolic intermediate biosynthesis; chorismate biosynthesis; chorismate from D-erythrose 4-phosphate and phosphoenolpyruvate: step 7/7. Functionally, catalyzes the anti-1,4-elimination of the C-3 phosphate and the C-6 proR hydrogen from 5-enolpyruvylshikimate-3-phosphate (EPSP) to yield chorismate, which is the branch point compound that serves as the starting substrate for the three terminal pathways of aromatic amino acid biosynthesis. This reaction introduces a second double bond into the aromatic ring system. The protein is Chorismate synthase of Francisella tularensis subsp. mediasiatica (strain FSC147).